The chain runs to 543 residues: Terpineol synthase, chloroplastic (543 aa).

A disordered region spans residues 1–22; the sequence is MNTEPSPNHYSAISSSDQNLTR. (2E)-geranyl diphosphate-binding residues include R263, D300, D304, R435, and N438. D300 and D304 together coordinate Mg(2+). A DDXXD motif motif is present at residues 300–304; sequence DDVYD. Mg(2+) contacts are provided by N438, T442, and E446.

The protein belongs to the terpene synthase family. Tpsb subfamily. In terms of assembly, monomer. It depends on Mg(2+) as a cofactor. Mn(2+) serves as cofactor. Confined to flowers.

Its subcellular location is the plastid. It localises to the chloroplast. The enzyme catalyses (2E)-geranyl diphosphate + H2O = (S)-alpha-terpineol + diphosphate. It catalyses the reaction (2E)-geranyl diphosphate = sabinene + diphosphate. It carries out the reaction (2E)-geranyl diphosphate = beta-myrcene + diphosphate. The catalysed reaction is (2E)-geranyl diphosphate = limonene + diphosphate. The enzyme catalyses (2E)-geranyl diphosphate + H2O = 1,8-cineole + diphosphate. Its pathway is secondary metabolite biosynthesis; terpenoid biosynthesis. Monoterpene synthase (TPS) involved in the biosynthesis of monoterpene natural products of the 'cineole cassette', volatile compounds present in floral scent. Catalyzes the conversion of (2E)-geranyl diphosphate (GPP) into alpha-terpineol and, as minor products, sabinene, beta-myrcene, limonene and 1,8-cineole. In Nicotiana alata (Winged tobacco), this protein is Terpineol synthase, chloroplastic.